The following is a 551-amino-acid chain: Peptidyl-prolyl cis-trans isomerase-like 4 (551 aa).

A PPIase cyclophilin-type domain is found at 1–185; it reads MSVLLETSLG…RDIRIRHVVV (185 aa). Residues 54–88 are disordered; it reads GDPSNTGKGGASIWSQLPSTSQDSSTSTYFTPESS. Positions 66-88 are enriched in polar residues; sequence IWSQLPSTSQDSSTSTYFTPESS. Residues 262 to 340 form the RRM domain; the sequence is NILFVCKLNP…RRIWVDFSQS (79 aa). Positions 352–551 are disordered; sequence RNAGSDAPRA…RQRSRDGSRR (200 aa). Basic and acidic residues-rich tracts occupy residues 384–397 and 408–454; these read KRGD…RDQP and SRQD…SHRD. Residues 455-464 show a composition bias toward basic residues; sequence HERHHLSRHV. A compositionally biased stretch (basic and acidic residues) spans 465 to 551; it reads RPSDEGESKC…RQRSRDGSRR (87 aa).

The protein belongs to the cyclophilin-type PPIase family. PPIL4 subfamily.

It localises to the nucleus. The catalysed reaction is [protein]-peptidylproline (omega=180) = [protein]-peptidylproline (omega=0). Functionally, PPIases accelerate the folding of proteins. It catalyzes the cis-trans isomerization of proline imidic peptide bonds in oligopeptides. The polypeptide is Peptidyl-prolyl cis-trans isomerase-like 4 (CYP6) (Mycosarcoma maydis (Corn smut fungus)).